Consider the following 375-residue polypeptide: Quinolinate synthase (375 aa).

Residues H47 and S64 each coordinate iminosuccinate. C110 serves as a coordination point for [4Fe-4S] cluster. Iminosuccinate is bound by residues 144–146 (YVN) and S165. C235 is a [4Fe-4S] cluster binding site. Residues 261–263 (HPE) and T278 contribute to the iminosuccinate site. C325 is a binding site for [4Fe-4S] cluster.

This sequence belongs to the quinolinate synthase family. Type 3 subfamily. [4Fe-4S] cluster serves as cofactor.

The protein localises to the cytoplasm. It carries out the reaction iminosuccinate + dihydroxyacetone phosphate = quinolinate + phosphate + 2 H2O + H(+). It participates in cofactor biosynthesis; NAD(+) biosynthesis; quinolinate from iminoaspartate: step 1/1. Its function is as follows. Catalyzes the condensation of iminoaspartate with dihydroxyacetone phosphate to form quinolinate. In Herpetosiphon aurantiacus (strain ATCC 23779 / DSM 785 / 114-95), this protein is Quinolinate synthase.